Here is a 348-residue protein sequence, read N- to C-terminus: Probable dual-specificity RNA methyltransferase RlmN (348 aa).

Glu-89 serves as the catalytic Proton acceptor. Residues 95–328 form the Radical SAM core domain; that stretch reads HKNRNTVCVS…VTLRISYGSK (234 aa). A disulfide bond links Cys-102 and Cys-333. Residues Cys-109, Cys-113, and Cys-116 each contribute to the [4Fe-4S] cluster site. Residues 159 to 160, Ser-191, 214 to 216, and Asn-290 each bind S-adenosyl-L-methionine; these read GE and SLH. Cys-333 (S-methylcysteine intermediate) is an active-site residue.

Belongs to the radical SAM superfamily. RlmN family. It depends on [4Fe-4S] cluster as a cofactor.

It is found in the cytoplasm. It carries out the reaction adenosine(2503) in 23S rRNA + 2 reduced [2Fe-2S]-[ferredoxin] + 2 S-adenosyl-L-methionine = 2-methyladenosine(2503) in 23S rRNA + 5'-deoxyadenosine + L-methionine + 2 oxidized [2Fe-2S]-[ferredoxin] + S-adenosyl-L-homocysteine. The enzyme catalyses adenosine(37) in tRNA + 2 reduced [2Fe-2S]-[ferredoxin] + 2 S-adenosyl-L-methionine = 2-methyladenosine(37) in tRNA + 5'-deoxyadenosine + L-methionine + 2 oxidized [2Fe-2S]-[ferredoxin] + S-adenosyl-L-homocysteine. In terms of biological role, specifically methylates position 2 of adenine 2503 in 23S rRNA and position 2 of adenine 37 in tRNAs. In Dictyoglomus turgidum (strain DSM 6724 / Z-1310), this protein is Probable dual-specificity RNA methyltransferase RlmN.